Here is a 109-residue protein sequence, read N- to C-terminus: Large ribosomal subunit protein uL22 (109 aa).

This sequence belongs to the universal ribosomal protein uL22 family. As to quaternary structure, part of the 50S ribosomal subunit.

Its function is as follows. This protein binds specifically to 23S rRNA; its binding is stimulated by other ribosomal proteins, e.g. L4, L17, and L20. It is important during the early stages of 50S assembly. It makes multiple contacts with different domains of the 23S rRNA in the assembled 50S subunit and ribosome. In terms of biological role, the globular domain of the protein is located near the polypeptide exit tunnel on the outside of the subunit, while an extended beta-hairpin is found that lines the wall of the exit tunnel in the center of the 70S ribosome. The polypeptide is Large ribosomal subunit protein uL22 (Methylobacillus flagellatus (strain ATCC 51484 / DSM 6875 / VKM B-1610 / KT)).